Reading from the N-terminus, the 891-residue chain is Mating-type protein A-alpha Y1 (891 aa).

Residues 146–205 (SKKPRPKFHSEYTPLLELYFRFNAYPTYADRRVLAEKTGMLTRQITVWFQNHRRRAKGPL) constitute a DNA-binding region (homeobox). Disordered regions lie at residues 241-291 (PITL…PSTL), 319-339 (DIEM…LPKG), 393-437 (TRKP…RRVS), 610-718 (ARRK…EQSL), and 800-822 (MNWT…GGDE). Residues 244–257 (LGNNKTPDLTTSSR) are compositionally biased toward polar residues. Over residues 328-337 (PKRRKMKKLP) the composition is skewed to basic residues. Residues 427 to 437 (ASSTVPSRRVS) show a composition bias toward low complexity. Positions 627 to 638 (KKDKKERKKAGL) are enriched in basic residues. Composition is skewed to low complexity over residues 651-667 (VSSR…TSAR) and 676-710 (QPSS…SMPS). Polar residues predominate over residues 800–818 (MNWTASVGSNAQDPASQES).

The protein resides in the nucleus. Specifies A-alpha-1 mating-type. May regulate the expression of genes specific to the homokaryotic cell type. This is Mating-type protein A-alpha Y1 from Schizophyllum commune (Split gill fungus).